The primary structure comprises 598 residues: Sulfoacetaldehyde acetyltransferase (598 aa).

Belongs to the TPP enzyme family. In terms of assembly, homotetramer. The cofactor is Mg(2+). Thiamine diphosphate serves as cofactor.

The protein localises to the cytoplasm. It catalyses the reaction acetyl phosphate + sulfite + H(+) = sulfoacetaldehyde + phosphate. The protein operates within organosulfur degradation; taurine degradation via aerobic pathway; acetyl phosphate and sulfite from taurine: step 2/2. The polypeptide is Sulfoacetaldehyde acetyltransferase (Castellaniella defragrans (Alcaligenes defragrans)).